The sequence spans 382 residues: Dual-specificity RNA methyltransferase RlmN (382 aa).

The active-site Proton acceptor is glutamate 95. The Radical SAM core domain maps to 101–347 (EDDRGTLCIS…TTVRKTRGDD (247 aa)). The cysteines at positions 108 and 352 are disulfide-linked. Residues cysteine 115, cysteine 119, and cysteine 122 each coordinate [4Fe-4S] cluster. S-adenosyl-L-methionine contacts are provided by residues 178 to 179 (GE), serine 210, 232 to 234 (SLH), and asparagine 309. The active-site S-methylcysteine intermediate is cysteine 352.

It belongs to the radical SAM superfamily. RlmN family. Requires [4Fe-4S] cluster as cofactor.

The protein resides in the cytoplasm. It catalyses the reaction adenosine(2503) in 23S rRNA + 2 reduced [2Fe-2S]-[ferredoxin] + 2 S-adenosyl-L-methionine = 2-methyladenosine(2503) in 23S rRNA + 5'-deoxyadenosine + L-methionine + 2 oxidized [2Fe-2S]-[ferredoxin] + S-adenosyl-L-homocysteine. The catalysed reaction is adenosine(37) in tRNA + 2 reduced [2Fe-2S]-[ferredoxin] + 2 S-adenosyl-L-methionine = 2-methyladenosine(37) in tRNA + 5'-deoxyadenosine + L-methionine + 2 oxidized [2Fe-2S]-[ferredoxin] + S-adenosyl-L-homocysteine. Functionally, specifically methylates position 2 of adenine 2503 in 23S rRNA and position 2 of adenine 37 in tRNAs. m2A2503 modification seems to play a crucial role in the proofreading step occurring at the peptidyl transferase center and thus would serve to optimize ribosomal fidelity. This Bordetella avium (strain 197N) protein is Dual-specificity RNA methyltransferase RlmN.